We begin with the raw amino-acid sequence, 292 residues long: 33 kDa chaperonin (292 aa).

2 disulfide bridges follow: cysteine 230–cysteine 232 and cysteine 263–cysteine 266.

This sequence belongs to the HSP33 family. Post-translationally, under oxidizing conditions two disulfide bonds are formed involving the reactive cysteines. Under reducing conditions zinc is bound to the reactive cysteines and the protein is inactive.

Its subcellular location is the cytoplasm. Redox regulated molecular chaperone. Protects both thermally unfolding and oxidatively damaged proteins from irreversible aggregation. Plays an important role in the bacterial defense system toward oxidative stress. In Escherichia coli O7:K1 (strain IAI39 / ExPEC), this protein is 33 kDa chaperonin.